A 183-amino-acid polypeptide reads, in one-letter code: Probable RNA 2'-phosphotransferase (183 aa).

It belongs to the KptA/TPT1 family.

Its function is as follows. Removes the 2'-phosphate from RNA via an intermediate in which the phosphate is ADP-ribosylated by NAD followed by a presumed transesterification to release the RNA and generate ADP-ribose 1''-2''-cyclic phosphate (APPR&gt;P). May function as an ADP-ribosylase. In Pyrococcus furiosus (strain ATCC 43587 / DSM 3638 / JCM 8422 / Vc1), this protein is Probable RNA 2'-phosphotransferase.